Reading from the N-terminus, the 98-residue chain is Aspartyl/glutamyl-tRNA(Asn/Gln) amidotransferase subunit C (98 aa).

It belongs to the GatC family. In terms of assembly, heterotrimer of A, B and C subunits.

The catalysed reaction is L-glutamyl-tRNA(Gln) + L-glutamine + ATP + H2O = L-glutaminyl-tRNA(Gln) + L-glutamate + ADP + phosphate + H(+). The enzyme catalyses L-aspartyl-tRNA(Asn) + L-glutamine + ATP + H2O = L-asparaginyl-tRNA(Asn) + L-glutamate + ADP + phosphate + 2 H(+). Its function is as follows. Allows the formation of correctly charged Asn-tRNA(Asn) or Gln-tRNA(Gln) through the transamidation of misacylated Asp-tRNA(Asn) or Glu-tRNA(Gln) in organisms which lack either or both of asparaginyl-tRNA or glutaminyl-tRNA synthetases. The reaction takes place in the presence of glutamine and ATP through an activated phospho-Asp-tRNA(Asn) or phospho-Glu-tRNA(Gln). This is Aspartyl/glutamyl-tRNA(Asn/Gln) amidotransferase subunit C from Roseiflexus castenholzii (strain DSM 13941 / HLO8).